We begin with the raw amino-acid sequence, 661 residues long: UvrABC system protein B (661 aa).

Residues 25 to 182 enclose the Helicase ATP-binding domain; it reads KGLNNKKRSQ…NDLVNLQYER (158 aa). An ATP-binding site is contributed by 38-45; it reads GITGSGKT. Positions 91 to 114 match the Beta-hairpin motif; it reads YYDYYQPEAYIPKTDVFIEKDSSI. The Helicase C-terminal domain maps to 430-592; the sequence is QVEDLVGEIQ…IIPKTINRTI (163 aa). A UVR domain is found at 621 to 656; the sequence is KAHIDKLRKEMLKAASNLEFEQAAKLRDQLKTLEEA.

The protein belongs to the UvrB family. As to quaternary structure, forms a heterotetramer with UvrA during the search for lesions. Interacts with UvrC in an incision complex.

The protein localises to the cytoplasm. In terms of biological role, the UvrABC repair system catalyzes the recognition and processing of DNA lesions. A damage recognition complex composed of 2 UvrA and 2 UvrB subunits scans DNA for abnormalities. Upon binding of the UvrA(2)B(2) complex to a putative damaged site, the DNA wraps around one UvrB monomer. DNA wrap is dependent on ATP binding by UvrB and probably causes local melting of the DNA helix, facilitating insertion of UvrB beta-hairpin between the DNA strands. Then UvrB probes one DNA strand for the presence of a lesion. If a lesion is found the UvrA subunits dissociate and the UvrB-DNA preincision complex is formed. This complex is subsequently bound by UvrC and the second UvrB is released. If no lesion is found, the DNA wraps around the other UvrB subunit that will check the other stand for damage. In Rickettsia bellii (strain RML369-C), this protein is UvrABC system protein B.